Here is a 294-residue protein sequence, read N- to C-terminus: Keratin-like protein KRT222 (294 aa).

The IF rod domain maps to 1-150; that stretch reads MELSQLLNEI…RLLEQEEIRY (150 aa). A coiled-coil region spans residues 1–151; the sequence is MELSQLLNEI…LLEQEEIRYY (151 aa).

Belongs to the intermediate filament family.

This Mus musculus (Mouse) protein is Keratin-like protein KRT222 (Krt222).